We begin with the raw amino-acid sequence, 136 residues long: Ribonuclease YqgF (136 aa).

It belongs to the YqgF nuclease family. Monomer; also forms low amounts of dimers. It depends on Mn(2+) as a cofactor.

It localises to the cytoplasm. Has robust sequence-specific RNase activity, acting as a 5'-3' exo/endonuclease on ssRNA substrates with minimally 3 consecutive adenine bases. Has no detectable nuclease activity on dsRNA, dsDNA or Holliday junction DNA. The polypeptide is Ribonuclease YqgF (Deinococcus radiodurans (strain ATCC 13939 / DSM 20539 / JCM 16871 / CCUG 27074 / LMG 4051 / NBRC 15346 / NCIMB 9279 / VKM B-1422 / R1)).